A 303-amino-acid polypeptide reads, in one-letter code: 4-diphosphocytidyl-2-C-methyl-D-erythritol kinase (303 aa).

K21 is an active-site residue. Position 106 to 116 (106 to 116 (PVAAGIGGGSA)) interacts with ATP. D148 is an active-site residue.

This sequence belongs to the GHMP kinase family. IspE subfamily.

The catalysed reaction is 4-CDP-2-C-methyl-D-erythritol + ATP = 4-CDP-2-C-methyl-D-erythritol 2-phosphate + ADP + H(+). It functions in the pathway isoprenoid biosynthesis; isopentenyl diphosphate biosynthesis via DXP pathway; isopentenyl diphosphate from 1-deoxy-D-xylulose 5-phosphate: step 3/6. Its function is as follows. Catalyzes the phosphorylation of the position 2 hydroxy group of 4-diphosphocytidyl-2C-methyl-D-erythritol. The polypeptide is 4-diphosphocytidyl-2-C-methyl-D-erythritol kinase (Nitrobacter hamburgensis (strain DSM 10229 / NCIMB 13809 / X14)).